We begin with the raw amino-acid sequence, 461 residues long: ATP synthase subunit beta 2 (461 aa).

Residue Gly151–Thr158 coordinates ATP.

Belongs to the ATPase alpha/beta chains family. F-type ATPases have 2 components, CF(1) - the catalytic core - and CF(0) - the membrane proton channel. CF(1) has five subunits: alpha(3), beta(3), gamma(1), delta(1), epsilon(1). CF(0) has three main subunits: a(1), b(2) and c(9-12). The alpha and beta chains form an alternating ring which encloses part of the gamma chain. CF(1) is attached to CF(0) by a central stalk formed by the gamma and epsilon chains, while a peripheral stalk is formed by the delta and b chains.

Its subcellular location is the cell inner membrane. The catalysed reaction is ATP + H2O + 4 H(+)(in) = ADP + phosphate + 5 H(+)(out). In terms of biological role, produces ATP from ADP in the presence of a proton gradient across the membrane. The catalytic sites are hosted primarily by the beta subunits. In Pseudoalteromonas atlantica (strain T6c / ATCC BAA-1087), this protein is ATP synthase subunit beta 2.